Consider the following 101-residue polypeptide: DNA-directed RNA polymerase subunit beta (101 aa).

The interval 74-101 is disordered; that stretch reads KRRLSALGPGGLSRERAGLEVRDVHSSH. The span at 86–101 shows a compositional bias: basic and acidic residues; it reads SRERAGLEVRDVHSSH.

Belongs to the RNA polymerase beta chain family. The RNAP catalytic core consists of 2 alpha, 1 beta, 1 beta' and 1 omega subunit. When a sigma factor is associated with the core the holoenzyme is formed, which can initiate transcription.

The catalysed reaction is RNA(n) + a ribonucleoside 5'-triphosphate = RNA(n+1) + diphosphate. Its function is as follows. DNA-dependent RNA polymerase catalyzes the transcription of DNA into RNA using the four ribonucleoside triphosphates as substrates. In Mycolicibacterium peregrinum (Mycobacterium peregrinum), this protein is DNA-directed RNA polymerase subunit beta (rpoB).